Here is a 463-residue protein sequence, read N- to C-terminus: RuvB-like 2 (463 aa).

An N-acetylalanine modification is found at Ala2. A Glycyl lysine isopeptide (Lys-Gly) (interchain with G-Cter in SUMO2) cross-link involves residue Lys9. ATP is bound at residue 77–84 (GQPGTGKT). Phosphoserine is present on Ser437. Residues Lys444 and Lys456 each participate in a glycyl lysine isopeptide (Lys-Gly) (interchain with G-Cter in SUMO2) cross-link.

It belongs to the RuvB family. In terms of assembly, forms homohexameric rings. Can form a dodecamer with RUVBL1 made of two stacked hexameric rings; however, even though RUVBL1 and RUVBL2 are present in equimolar ratio, the oligomeric status of each hexamer is not known. Oligomerization may regulate binding to nucleic acids and conversely, binding to nucleic acids may affect the dodecameric assembly. Interaction of the complex with DHX34 results in conformational changes of the N-terminus of the RUVBL2 subunits, resulting in loss of nucleotide binding ability and ATP hydrolysis of the complex. Interacts with the transcriptional activation domain of MYC. Interacts with ATF2. Component of the RNA polymerase II holoenzyme complex. May also act to bridge the LEF1/TCF1-CTNNB1 complex and TBP. Component of the NuA4 histone acetyltransferase complex which contains the catalytic subunit KAT5/TIP60 and the subunits EP400, TRRAP/PAF400, BRD8/SMAP, EPC1, DMAP1/DNMAP1, RUVBL1/TIP49, RUVBL2, ING3, actin, ACTL6A/BAF53A, MORF4L1/MRG15, MORF4L2/MRGX, MRGBP, YEATS4/GAS41, VPS72/YL1 and MEAF6. The NuA4 complex interacts with MYC and the adenovirus E1A protein. RUVBL2 interacts with EP400. Component of a NuA4-related complex which contains EP400, TRRAP/PAF400, SRCAP, BRD8/SMAP, EPC1, DMAP1/DNMAP1, RUVBL1/TIP49, RUVBL2, actin, ACTL6A/BAF53A, VPS72 and YEATS4/GAS41. Interacts with NPAT. Component of the chromatin-remodeling INO80 complex; specifically part of a complex module associated with the helicase ATP-binding and the helicase C-terminal domain of INO80. Component of some MLL1/MLL complex, at least composed of the core components KMT2A/MLL1, ASH2L, HCFC1/HCF1, WDR5 and RBBP5, as well as the facultative components BACC1, CHD8, E2F6, HSP70, INO80C, KANSL1, LAS1L, MAX, MCRS1, MGA, MYST1/MOF, PELP1, PHF20, PRP31, RING2, RUVB1/TIP49A, RUVB2/TIP49B, SENP3, TAF1, TAF4, TAF6, TAF7, TAF9 and TEX10. Interacts with IGHMBP2. Interacts with TELO2. Interacts with HINT1. Component of a SWR1-like complex. Component of the R2TP complex composed at least of RUVBL1, RUVBL2, RPAP3 and PIHD1. Component of the PAQosome complex which is responsible for the biogenesis of several protein complexes and which consists of R2TP complex members RUVBL1, RUVBL2, RPAP3 and PIH1D1, URI complex members PFDN2, PFDN6, PDRG1, UXT and URI1 as well as ASDURF, POLR2E and DNAAF10/WDR92. Interacts with ITFG1. Interacts with ZMYND10. Interacts with WAC; WAC positively regulates MTOR activity by promoting the assembly of the TTT complex composed of TELO2, TTI1 and TTI2 and the RUVBL complex composed of RUVBL1 and RUVBL2 into the TTT-RUVBL complex which leads to the dimerization of the mTORC1 complex and its subsequent activation. Forms a complex with APPL1 and APPL2. Interacts with ZNHIT2 (via HIT-type zinc finger) in the presence of ATP or ADP; shows a stronger interaction in the presence of ADP. The RUVBL1/RUVBL2 complex interacts with ZNHIT1 (via HIT-type zinc finger), ZNHIT3 (via HIT-type zinc finger), ZNHIT6 (via HIT-type zinc finger) and DDX59/ZNHIT5 (via HIT-type zinc finger) in the presence of ADP. Interacts with NOPCHAP1; the interaction is direct and disrupted upon ATP binding. Interacts with SMG1.

It is found in the nucleus matrix. Its subcellular location is the nucleus. The protein localises to the nucleoplasm. The protein resides in the cytoplasm. It localises to the membrane. It is found in the dynein axonemal particle. The catalysed reaction is ATP + H2O = ADP + phosphate + H(+). Functionally, possesses single-stranded DNA-stimulated ATPase and ATP-dependent DNA helicase (5' to 3') activity; hexamerization is thought to be critical for ATP hydrolysis and adjacent subunits in the ring-like structure contribute to the ATPase activity. Component of the NuA4 histone acetyltransferase complex which is involved in transcriptional activation of select genes principally by acetylation of nucleosomal histones H4 and H2A. This modification may both alter nucleosome-DNA interactions and promote interaction of the modified histones with other proteins which positively regulate transcription. This complex may be required for the activation of transcriptional programs associated with oncogene and proto-oncogene mediated growth induction, tumor suppressor mediated growth arrest and replicative senescence, apoptosis, and DNA repair. The NuA4 complex ATPase and helicase activities seem to be, at least in part, contributed by the association of RUVBL1 and RUVBL2 with EP400. NuA4 may also play a direct role in DNA repair when recruited to sites of DNA damage. Component of a SWR1-like complex that specifically mediates the removal of histone H2A.Z/H2AZ1 from the nucleosome. Proposed core component of the chromatin remodeling INO80 complex which exhibits DNA- and nucleosome-activated ATPase activity and catalyzes ATP-dependent nucleosome sliding. Plays an essential role in oncogenic transformation by MYC and also modulates transcriptional activation by the LEF1/TCF1-CTNNB1 complex. May also inhibit the transcriptional activity of ATF2. Involved in the endoplasmic reticulum (ER)-associated degradation (ERAD) pathway where it negatively regulates expression of ER stress response genes. May play a role in regulating the composition of the U5 snRNP complex. This Bos taurus (Bovine) protein is RuvB-like 2 (RUVBL2).